Reading from the N-terminus, the 147-residue chain is D-aminoacyl-tRNA deacylase (147 aa).

The Gly-cisPro motif, important for rejection of L-amino acids motif lies at 137–138 (GP).

Belongs to the DTD family. As to quaternary structure, homodimer.

It is found in the cytoplasm. The catalysed reaction is glycyl-tRNA(Ala) + H2O = tRNA(Ala) + glycine + H(+). The enzyme catalyses a D-aminoacyl-tRNA + H2O = a tRNA + a D-alpha-amino acid + H(+). Its function is as follows. An aminoacyl-tRNA editing enzyme that deacylates mischarged D-aminoacyl-tRNAs. Also deacylates mischarged glycyl-tRNA(Ala), protecting cells against glycine mischarging by AlaRS. Acts via tRNA-based rather than protein-based catalysis; rejects L-amino acids rather than detecting D-amino acids in the active site. By recycling D-aminoacyl-tRNA to D-amino acids and free tRNA molecules, this enzyme counteracts the toxicity associated with the formation of D-aminoacyl-tRNA entities in vivo and helps enforce protein L-homochirality. Upon expression in B.subtilis strain 168 confers resistance to D-Tyr and D-Asp, suggesting it acts on both of these amino acids. This is D-aminoacyl-tRNA deacylase from Bacillus amyloliquefaciens (Bacillus velezensis).